A 431-amino-acid chain; its full sequence is L-cysteine:1D-myo-inositol 2-amino-2-deoxy-alpha-D-glucopyranoside ligase (431 aa).

C44 is a binding site for Zn(2+). L-cysteinyl-5'-AMP-binding positions include 44–47, T59, and 82–84; these read CGIT and NVT. Positions 46-56 match the 'HIGH' region motif; the sequence is ITPYDATHLGH. A 'ERGGDP' region motif is present at residues 187–192; the sequence is ERGGDP. W227 contacts L-cysteinyl-5'-AMP. C231 lines the Zn(2+) pocket. L-cysteinyl-5'-AMP is bound at residue 249 to 251; that stretch reads GND. H256 provides a ligand contact to Zn(2+). I283 is a binding site for L-cysteinyl-5'-AMP. Residues 289–293 carry the 'KMSKS' region motif; the sequence is KMSKS.

Belongs to the class-I aminoacyl-tRNA synthetase family. MshC subfamily. As to quaternary structure, monomer. Requires Zn(2+) as cofactor.

It carries out the reaction 1D-myo-inositol 2-amino-2-deoxy-alpha-D-glucopyranoside + L-cysteine + ATP = 1D-myo-inositol 2-(L-cysteinylamino)-2-deoxy-alpha-D-glucopyranoside + AMP + diphosphate + H(+). In terms of biological role, catalyzes the ATP-dependent condensation of GlcN-Ins and L-cysteine to form L-Cys-GlcN-Ins. This chain is L-cysteine:1D-myo-inositol 2-amino-2-deoxy-alpha-D-glucopyranoside ligase, found in Stackebrandtia nassauensis (strain DSM 44728 / CIP 108903 / NRRL B-16338 / NBRC 102104 / LLR-40K-21).